A 446-amino-acid polypeptide reads, in one-letter code: Chromosomal replication initiator protein DnaA (446 aa).

The segment at 1–72 is domain I, interacts with DnaA modulators; sequence MKNISDLWNQ…ADTIYDLTGE (72 aa). The tract at residues 72–109 is domain II; the sequence is EELSIKFVIPQNQNEEDFMPKSPIKKMSKEEPADFPQN. The tract at residues 110 to 326 is domain III, AAA+ region; the sequence is MLNPKYTFDT…GALIRVVAYS (217 aa). Positions 154, 156, 157, and 158 each coordinate ATP. A domain IV, binds dsDNA region spans residues 327–446; the sequence is SLINKDINAD…QIKEIKEQLR (120 aa).

The protein belongs to the DnaA family. Oligomerizes as a right-handed, spiral filament on DNA at oriC.

The protein localises to the cytoplasm. Plays an essential role in the initiation and regulation of chromosomal replication. ATP-DnaA binds to the origin of replication (oriC) to initiate formation of the DNA replication initiation complex once per cell cycle. Binds the DnaA box (a 9 base pair repeat at the origin) and separates the double-stranded (ds)DNA. Forms a right-handed helical filament on oriC DNA; dsDNA binds to the exterior of the filament while single-stranded (ss)DNA is stabiized in the filament's interior. The ATP-DnaA-oriC complex binds and stabilizes one strand of the AT-rich DNA unwinding element (DUE), permitting loading of DNA polymerase. After initiation quickly degrades to an ADP-DnaA complex that is not apt for DNA replication. Binds acidic phospholipids. The polypeptide is Chromosomal replication initiator protein DnaA (Bacillus licheniformis (strain ATCC 14580 / DSM 13 / JCM 2505 / CCUG 7422 / NBRC 12200 / NCIMB 9375 / NCTC 10341 / NRRL NRS-1264 / Gibson 46)).